Here is a 291-residue protein sequence, read N- to C-terminus: Urease accessory protein UreD (291 aa).

This sequence belongs to the UreD family. UreD, UreF and UreG form a complex that acts as a GTP-hydrolysis-dependent molecular chaperone, activating the urease apoprotein by helping to assemble the nickel containing metallocenter of UreC. The UreE protein probably delivers the nickel.

Its subcellular location is the cytoplasm. Functionally, required for maturation of urease via the functional incorporation of the urease nickel metallocenter. This Polynucleobacter asymbioticus (strain DSM 18221 / CIP 109841 / QLW-P1DMWA-1) (Polynucleobacter necessarius subsp. asymbioticus) protein is Urease accessory protein UreD.